We begin with the raw amino-acid sequence, 501 residues long: Protein anon-37Cs (501 aa).

The protein resides in the cytoplasm. In terms of biological role, has a non-vital function. The sequence is that of Protein anon-37Cs (anon-37Cs) from Drosophila simulans (Fruit fly).